The following is a 719-amino-acid chain: 2'-5'-oligoadenylate synthase 2 (719 aa).

A lipid anchor (N-myristoyl glycine) is attached at Gly-2. OAS domain regions lie at residues 11–335 (VPAQ…SWNV) and 343–683 (TPGH…WKVP). The residue at position 378 (Lys-378) is an N6-acetyllysine. Ser-396 serves as a coordination point for ATP. Residues Asp-408, Asp-410, and Asp-481 each coordinate Mg(2+). Residues Arg-544 and Lys-547 each coordinate ATP.

The protein belongs to the 2-5A synthase family. Homodimer. It depends on Mg(2+) as a cofactor. Post-translationally, myristoylation is not essential for its activity. In terms of processing, glycosylated. Glycosylation is essential for its activity.

The protein resides in the cytoplasm. It is found in the perinuclear region. It carries out the reaction 3 ATP = 5'-triphosphoadenylyl-(2'-&gt;5')-adenylyl-(2'-&gt;5')-adenosine + 2 diphosphate. With respect to regulation, produced as a latent enzyme which is activated by double stranded RNA (dsRNA) generated during the course of viral infection. The dsRNA activator must be at least 15 nucleotides long, and no modification of the 2'-hydroxyl group is tolerated. ssRNA or dsDNA do not act as activators. Strongly inhibited by copper, iron and zinc ions. Partially inhibited by cobalt and nickel ions. Interferon-induced, dsRNA-activated antiviral enzyme which plays a critical role in cellular innate antiviral response. Activated by detection of double stranded RNA (dsRNA): polymerizes higher oligomers of 2'-5'-oligoadenylates (2-5A) from ATP which then bind to the inactive monomeric form of ribonuclease L (RNASEL) leading to its dimerization and subsequent activation. Activation of RNASEL leads to degradation of cellular as well as viral RNA, resulting in the inhibition of protein synthesis, thus terminating viral replication. Can mediate the antiviral effect via the classical RNASEL-dependent pathway or an alternative antiviral pathway independent of RNASEL. In addition, it may also play a role in other cellular processes such as apoptosis, cell growth, differentiation and gene regulation. May act as a negative regulator of lactation, stopping lactation in virally infected mammary gland lobules, thereby preventing transmission of viruses to neonates. Non-infected lobules would not be affected, allowing efficient pup feeding during infection. The protein is 2'-5'-oligoadenylate synthase 2 of Homo sapiens (Human).